A 404-amino-acid chain; its full sequence is 4-hydroxyphenylpyruvate dioxygenase (404 aa).

VOC domains lie at 28–163 and 194–353; these read GYDH…FIQR and YVDH…IFTK. Histidine 197, histidine 280, and glutamate 364 together coordinate Fe cation.

This sequence belongs to the 4HPPD family. Fe cation is required as a cofactor.

It carries out the reaction 3-(4-hydroxyphenyl)pyruvate + O2 = homogentisate + CO2. It participates in amino-acid degradation; L-phenylalanine degradation; acetoacetate and fumarate from L-phenylalanine: step 3/6. Key enzyme in the degradation of tyrosine. The protein is 4-hydroxyphenylpyruvate dioxygenase (TFA) of Tetrahymena thermophila.